The chain runs to 127 residues: Fluoride-specific ion channel FluC (127 aa).

4 helical membrane passes run 4 to 24, 35 to 55, 71 to 91, and 103 to 123; these read LLLA…FLSM, LGTL…LAWF, TGFC…VFLL, and IAVN…LFSA. 2 residues coordinate Na(+): glycine 75 and threonine 78.

The protein belongs to the fluoride channel Fluc/FEX (TC 1.A.43) family.

The protein resides in the cell inner membrane. The catalysed reaction is fluoride(in) = fluoride(out). Na(+) is not transported, but it plays an essential structural role and its presence is essential for fluoride channel function. Its function is as follows. Fluoride-specific ion channel. Important for reducing fluoride concentration in the cell, thus reducing its toxicity. The protein is Fluoride-specific ion channel FluC of Enterobacter sp. (strain 638).